The chain runs to 483 residues: Membrane-bound lytic murein transglycosylase F (483 aa).

Positions 1–18 (MKGLVIRISVALALLLWA) are cleaved as a signal peptide. The non-LT domain stretch occupies residues 19–270 (VDMVFPWQQI…RIEEKYFSHI (252 aa)). The tract at residues 272-483 (QFDYVDIKSY…IMITPQNSQD (212 aa)) is LT domain. E315 is a catalytic residue.

In the N-terminal section; belongs to the bacterial solute-binding protein 3 family. It in the C-terminal section; belongs to the transglycosylase Slt family.

Its subcellular location is the cell outer membrane. The enzyme catalyses Exolytic cleavage of the (1-&gt;4)-beta-glycosidic linkage between N-acetylmuramic acid (MurNAc) and N-acetylglucosamine (GlcNAc) residues in peptidoglycan, from either the reducing or the non-reducing ends of the peptidoglycan chains, with concomitant formation of a 1,6-anhydrobond in the MurNAc residue.. Its function is as follows. Murein-degrading enzyme that degrades murein glycan strands and insoluble, high-molecular weight murein sacculi, with the concomitant formation of a 1,6-anhydromuramoyl product. Lytic transglycosylases (LTs) play an integral role in the metabolism of the peptidoglycan (PG) sacculus. Their lytic action creates space within the PG sacculus to allow for its expansion as well as for the insertion of various structures such as secretion systems and flagella. This Actinobacillus succinogenes (strain ATCC 55618 / DSM 22257 / CCUG 43843 / 130Z) protein is Membrane-bound lytic murein transglycosylase F.